Reading from the N-terminus, the 323-residue chain is Glucokinase (323 aa).

8-13 (GDVGGT) lines the ATP pocket.

The protein belongs to the bacterial glucokinase family.

It localises to the cytoplasm. The enzyme catalyses D-glucose + ATP = D-glucose 6-phosphate + ADP + H(+). In Yersinia enterocolitica serotype O:8 / biotype 1B (strain NCTC 13174 / 8081), this protein is Glucokinase.